A 218-amino-acid polypeptide reads, in one-letter code: Ohanin-like protein (218 aa).

Residues 1–40 (MSPSAGFQFSLYFLQTKKVLWKLTGLCYILLFTLCFFADQ) form the signal peptide. A propeptide spanning residues 41 to 48 (ENGGKALA) is cleaved from the precursor. One can recognise a B30.2/SPRY domain in the interval 49 to 155 (SPPGIWKRAD…RIWQTGLWWL (107 aa)). A propeptide spanning residues 156–218 (RHLETDPGRV…LGGTVSLTTL (63 aa)) is cleaved from the precursor.

This sequence belongs to the ohanin/vespryn family. Expressed by the venom gland.

The protein resides in the secreted. Functionally, neurotoxin that produces dose-dependent hypolocomotion and hyperalgesia in mice. May directly act on the central nervous system, as it is 6500-fold more potent when administered intracerebroventricularly than intraperitoneal. The sequence is that of Ohanin-like protein from Lachesis muta muta (Bushmaster).